A 399-amino-acid polypeptide reads, in one-letter code: Stearoyl-[acyl-carrier-protein] 9-desaturase, chloroplastic (399 aa).

The segment covering 1 to 12 (MALNLNPVSTPF) has biased composition (polar residues). The transit peptide at 1 to 35 (MALNLNPVSTPFQCRRLPSFSPRQTPSRRSPKFFM) directs the protein to the chloroplast. The tract at residues 1–57 (MALNLNPVSTPFQCRRLPSFSPRQTPSRRSPKFFMASTLSSSSPKEAESLKKPFSPP) is disordered. The Fe cation site is built by E141, E179, H182, E232, E265, and H268.

Belongs to the fatty acid desaturase type 2 family. In terms of assembly, homodimer. The cofactor is Fe(2+).

The protein localises to the plastid. It localises to the chloroplast. It catalyses the reaction octadecanoyl-[ACP] + 2 reduced [2Fe-2S]-[ferredoxin] + O2 + 2 H(+) = (9Z)-octadecenoyl-[ACP] + 2 oxidized [2Fe-2S]-[ferredoxin] + 2 H2O. It participates in lipid metabolism; fatty acid metabolism. In terms of biological role, converts stearoyl-ACP to oleoyl-ACP by introduction of a cis double bond between carbons 9 and 10 of the acyl chain. The chain is Stearoyl-[acyl-carrier-protein] 9-desaturase, chloroplastic from Spinacia oleracea (Spinach).